A 365-amino-acid chain; its full sequence is 3-isopropylmalate dehydrogenase (365 aa).

80 to 93 (GPKWADNTGDQRPE) provides a ligand contact to NAD(+). Substrate contacts are provided by R100, R110, R138, and D223. D223, D247, and D251 together coordinate Mg(2+). Residue 280 to 292 (GSAPDIAGQDVAN) participates in NAD(+) binding. The interval 337 to 365 (NEEDASTSAFGREVATRAADSVPQNAPTP) is disordered.

The protein belongs to the isocitrate and isopropylmalate dehydrogenases family. LeuB type 1 subfamily. Homodimer. The cofactor is Mg(2+). Requires Mn(2+) as cofactor.

Its subcellular location is the cytoplasm. The enzyme catalyses (2R,3S)-3-isopropylmalate + NAD(+) = 4-methyl-2-oxopentanoate + CO2 + NADH. It participates in amino-acid biosynthesis; L-leucine biosynthesis; L-leucine from 3-methyl-2-oxobutanoate: step 3/4. Functionally, catalyzes the oxidation of 3-carboxy-2-hydroxy-4-methylpentanoate (3-isopropylmalate) to 3-carboxy-4-methyl-2-oxopentanoate. The product decarboxylates to 4-methyl-2 oxopentanoate. This chain is 3-isopropylmalate dehydrogenase, found in Salinibacter ruber (strain DSM 13855 / M31).